Reading from the N-terminus, the 428-residue chain is Flotillin-2 (428 aa).

G2 is lipidated: N-myristoyl glycine. Residue C4 is the site of S-palmitoyl cysteine; by ZDHHC5 attachment. A lipid anchor (S-palmitoyl cysteine) is attached at C19. A lipid anchor (S-palmitoyl cysteine; by ZDHHC5) is attached at C20. S405 carries the post-translational modification Phosphoserine.

Belongs to the band 7/mec-2 family. Flotillin subfamily. As to quaternary structure, heterooligomeric complex of flotillin-1 and flotillin-2 and caveolin-1 and caveolin-2. Interacts with ECPAS. ZDHHC5-catalyzed palmitoylation may be required for the formation of higher-order complexes and for neurite outgrowth in cultured neural stem cells.

It localises to the cell membrane. The protein localises to the membrane. The protein resides in the caveola. Its subcellular location is the endosome. Functionally, may act as a scaffolding protein within caveolar membranes, functionally participating in formation of caveolae or caveolae-like vesicles. May be involved in epidermal cell adhesion and epidermal structure and function. This is Flotillin-2 (FLOT2) from Bos taurus (Bovine).